A 334-amino-acid chain; its full sequence is Glycerol-3-phosphate dehydrogenase [NAD(P)+] (334 aa).

Positions 13, 33, and 106 each coordinate NADPH. Sn-glycerol 3-phosphate contacts are provided by Lys106, Gly137, and Ser139. Residue Ala141 participates in NADPH binding. Residues Lys192, Asp245, Ser255, Arg256, and Asn257 each coordinate sn-glycerol 3-phosphate. Residue Lys192 is the Proton acceptor of the active site. Arg256 provides a ligand contact to NADPH. NADPH contacts are provided by Val280 and Glu282.

It belongs to the NAD-dependent glycerol-3-phosphate dehydrogenase family.

It localises to the cytoplasm. It carries out the reaction sn-glycerol 3-phosphate + NAD(+) = dihydroxyacetone phosphate + NADH + H(+). The enzyme catalyses sn-glycerol 3-phosphate + NADP(+) = dihydroxyacetone phosphate + NADPH + H(+). Its pathway is membrane lipid metabolism; glycerophospholipid metabolism. Catalyzes the reduction of the glycolytic intermediate dihydroxyacetone phosphate (DHAP) to sn-glycerol 3-phosphate (G3P), the key precursor for phospholipid synthesis. This Chlamydia trachomatis serovar L2 (strain ATCC VR-902B / DSM 19102 / 434/Bu) protein is Glycerol-3-phosphate dehydrogenase [NAD(P)+].